A 376-amino-acid chain; its full sequence is MESYDIIANQPVVIDNGSGVIKAGFAGDQIPKYCFPNYVGRPKHMRVMAGALEGDLFIGPKAEEHRGLLAIRYPMEHGVVRDWNDMERIWQYVYSKDQLQTFSEEHPVLLTEAPLNPSKNREKAAEVFFETFNVPALFISMQAVLSLYATGRTTGVVLDSGDGVTHAVPVYEGFAMPHSIMRVDIAGRDVSRYLRLLLRKEGADFHTSAEFEVVRTIKERACYLSINPQKDEALETEKVQYTLPDGSTLNVGPARFRAPELLFQPDLIGDESEGLHEVLVFAIHKSDMDLRRTLFANIMLSGGSTLFKGFGDRLLSEVKKLAPKDVKIKISAPQERLYSTWIGGSILASLDTFKKMWVSKKEYEEDGSRAIHRKTF.

The residue at position 1 (methionine 1) is an N-acetylmethionine. 3'-nitrotyrosine is present on tyrosine 4.

It belongs to the actin family. ARP1 subfamily.

It localises to the cytoplasm. The protein localises to the cytoskeleton. It is found in the microtubule organizing center. The protein resides in the centrosome. Functionally, component of a multi-subunit complex involved in microtubule based vesicle motility. It is associated with the centrosome. In Bos taurus (Bovine), this protein is Beta-centractin (ACTR1B).